A 315-amino-acid polypeptide reads, in one-letter code: Acetyl-coenzyme A carboxylase carboxyl transferase subunit alpha (315 aa).

The CoA carboxyltransferase C-terminal domain occupies 32 to 293 (NISDEIARLQ…RADLVQQLDM (262 aa)).

This sequence belongs to the AccA family. In terms of assembly, acetyl-CoA carboxylase is a heterohexamer composed of biotin carboxyl carrier protein (AccB), biotin carboxylase (AccC) and two subunits each of ACCase subunit alpha (AccA) and ACCase subunit beta (AccD).

It localises to the cytoplasm. The enzyme catalyses N(6)-carboxybiotinyl-L-lysyl-[protein] + acetyl-CoA = N(6)-biotinyl-L-lysyl-[protein] + malonyl-CoA. It functions in the pathway lipid metabolism; malonyl-CoA biosynthesis; malonyl-CoA from acetyl-CoA: step 1/1. In terms of biological role, component of the acetyl coenzyme A carboxylase (ACC) complex. First, biotin carboxylase catalyzes the carboxylation of biotin on its carrier protein (BCCP) and then the CO(2) group is transferred by the carboxyltransferase to acetyl-CoA to form malonyl-CoA. This is Acetyl-coenzyme A carboxylase carboxyl transferase subunit alpha from Pseudomonas putida (strain ATCC 47054 / DSM 6125 / CFBP 8728 / NCIMB 11950 / KT2440).